Here is a 745-residue protein sequence, read N- to C-terminus: DEAD-box ATP-dependent RNA helicase 3A, chloroplastic (745 aa).

The transit peptide at 1-41 (MASLVTLPAIAFSNPATASGAVRLRAAAFRCWALRRRGWAV) directs the protein to the chloroplast. The Q motif motif lies at 88–116 (LAIARLGLPDELVATLEKRGITHLFPIQR). In terms of domain architecture, Helicase ATP-binding spans 119–295 (LIPALGGRDL…RRYLNNPLTI (177 aa)). Position 132–139 (132–139 (AKTGTGKT)) interacts with ATP. Positions 243–246 (DEAD) match the DEAD box motif. Residues 324 to 469 (ILSDLITVYA…ISPPSIEEVL (146 aa)) enclose the Helicase C-terminal domain. The interval 606 to 724 (LTKISKLPAL…SLGGRESSRS (119 aa)) is disordered. Residues 641 to 650 (GGGASRGRGG) are compositionally biased toward gly residues. The segment covering 656-670 (EDRYRRGGRSLRSDN) has biased composition (basic and acidic residues). The segment covering 687–724 (RSSSSFGGRSSSYGSRGSPSPSFGVRSSSLGGRESSRS) has biased composition (low complexity). The segment at 727–744 (GACFNCGESGHRASDCPN) adopts a CCHC-type zinc-finger fold.

This sequence belongs to the DEAD box helicase family. DDX21/DDX50 subfamily.

It is found in the plastid. The protein localises to the chloroplast. It carries out the reaction ATP + H2O = ADP + phosphate + H(+). Its function is as follows. Nuclear genome-encoded factor involved in ribosome biogenesis in chloroplasts. Binds specific group II introns in chloroplasts and facilitates their splicing. Required for normal development of chloroplasts. This Zea mays (Maize) protein is DEAD-box ATP-dependent RNA helicase 3A, chloroplastic.